The sequence spans 131 residues: Ribonuclease VapC3 (131 aa).

The PINc domain maps to 4-121; it reads VVDASAIAAL…GKLLTLDRQL (118 aa). The Mg(2+) site is built by D6, D100, and D118.

Belongs to the PINc/VapC protein family. As to quaternary structure, homodimer. Forms a complex with putative antitoxin VapB3, possibly VapB(2)-VapC(2). The cofactor is Mg(2+).

Inhibited by EDTA. In terms of biological role, toxic component of a type II toxin-antitoxin (TA) system. Has ribonuclease activity. In Pyrobaculum aerophilum (strain ATCC 51768 / DSM 7523 / JCM 9630 / CIP 104966 / NBRC 100827 / IM2), this protein is Ribonuclease VapC3.